The following is a 516-amino-acid chain: Nucleolar complex protein 4 homolog (516 aa).

Helical transmembrane passes span 297–317, 347–367, and 375–395; these read ACDLGGALSLLALNGLFILIH, FFHLADLFLSSSHLPAYLVAA, and LALTAPPEALLMVLPFICNLL.

This sequence belongs to the CBF/MAK21 family.

It is found in the nucleus membrane. It localises to the nucleus. The protein localises to the nucleolus. In Homo sapiens (Human), this protein is Nucleolar complex protein 4 homolog (NOC4L).